A 157-amino-acid polypeptide reads, in one-letter code: Large ribosomal subunit protein bL34c (157 aa).

The N-terminal 97 residues, 1-97 (MASLSTSVVA…GQRRRGLVVR (97 aa)), are a transit peptide targeting the chloroplast.

The protein belongs to the bacterial ribosomal protein bL34 family. In terms of assembly, part of the 50S ribosomal subunit.

It is found in the plastid. It localises to the chloroplast. In terms of biological role, this protein binds directly to 23S ribosomal RNA. This Arabidopsis thaliana (Mouse-ear cress) protein is Large ribosomal subunit protein bL34c (RPL34).